Consider the following 313-residue polypeptide: ADP,ATP carrier protein (313 aa).

Solcar repeat units follow at residues 11–104 (PPFV…FKKM), 116–208 (KWMA…IKPV), and 216–302 (NNFL…LQVL). A run of 5 helical transmembrane segments spans residues 13–40 (FVAD…IKLL), 81–105 (TANV…KKMF), 114–134 (YWKW…TSLL), 184–205 (FGPS…YDSI), and 219–239 (LASF…SYPL). Residues arginine 86 and arginine 98 each contribute to the ADP site. Arginine 243 contributes to the ADP binding site. The tract at residues 243–248 (RRRMMM) is important for transport activity. The short motif at 243-248 (RRRMMM) is the Nucleotide carrier signature motif element. Residues 279–299 (AGANILRGVAGAGVLSIYDQL) form a helical membrane-spanning segment.

It belongs to the mitochondrial carrier (TC 2.A.29) family. In terms of assembly, monomer.

The protein resides in the mitochondrion inner membrane. It catalyses the reaction ADP(in) + ATP(out) = ADP(out) + ATP(in). Its activity is regulated as follows. The matrix-open state (m-state) is inhibited by the membrane-permeable bongkrekic acid (BKA). The cytoplasmic-open state (c-state) is inhibited by the membrane-impermeable toxic inhibitor carboxyatractyloside (CATR). In terms of biological role, ADP:ATP antiporter that mediates import of ADP into the mitochondrial matrix for ATP synthesis, and export of ATP out to fuel the cell. Cycles between the cytoplasmic-open state (c-state) and the matrix-open state (m-state): operates by the alternating access mechanism with a single substrate-binding site intermittently exposed to either the cytosolic (c-state) or matrix (m-state) side of the inner mitochondrial membrane. The polypeptide is ADP,ATP carrier protein (aac) (Neurospora crassa (strain ATCC 24698 / 74-OR23-1A / CBS 708.71 / DSM 1257 / FGSC 987)).